Reading from the N-terminus, the 77-residue chain is UPF0291 protein YnzC (77 aa).

Residues 56 to 77 form a disordered region; sequence DPEGNDVTPEKLKREQRNNKLH. Positions 63–77 are enriched in basic and acidic residues; sequence TPEKLKREQRNNKLH.

The protein belongs to the UPF0291 family.

The protein localises to the cytoplasm. The chain is UPF0291 protein YnzC (ynzC) from Bacillus subtilis (strain 168).